The chain runs to 752 residues: F-box and WD repeat domain containing protein 10B (752 aa).

6 WD repeats span residues 169-206 (GLNQ…TSLP), 451-490 (GHAG…CTRI), 493-532 (GHQG…KTFR), 534-569 (KDPI…LVKT), 572-609 (GHEG…ERCL), and 611-652 (AFKH…KVIK).

As to expression, expressed in pancreas, heart and skeletal muscle.

The protein is F-box and WD repeat domain containing protein 10B of Homo sapiens (Human).